Consider the following 78-residue polypeptide: Major outer membrane lipoprotein Lpp 1 (78 aa).

The N-terminal stretch at 1 to 20 (MNRTKLVLGAVILGSTLLAG) is a signal peptide. Cys21 is lipidated: N-palmitoyl cysteine. Cys21 carries S-diacylglycerol cysteine lipidation. 2 repeats span residues 24–34 (NAKIDQLSSDV) and 38–48 (NAKVDQLSNDV). The stretch at 27 to 75 (IDQLSSDVQTLNAKVDQLSNDVNAMRSDVQAAKDDAARANQRLDNQATK) forms a coiled coil. The tract at residues 56-78 (QAAKDDAARANQRLDNQATKYRK) is disordered. The segment covering 68–78 (RLDNQATKYRK) has biased composition (polar residues). The residue at position 78 (Lys78) is an N6-murein peptidoglycan lysine.

The protein belongs to the Lpp family. In terms of assembly, homotrimer.

It is found in the cell outer membrane. It localises to the secreted. The protein resides in the cell wall. Functionally, a highly abundant outer membrane lipoprotein that controls the distance between the inner and outer membranes. The only protein known to be covalently linked to the peptidoglycan network (PGN). Also non-covalently binds the PGN. The link between the cell outer membrane and PGN contributes to maintenance of the structural and functional integrity of the cell envelope, and maintains the correct distance between the PGN and the outer membrane. In Salmonella paratyphi A (strain ATCC 9150 / SARB42), this protein is Major outer membrane lipoprotein Lpp 1.